Here is a 151-residue protein sequence, read N- to C-terminus: Putative pre-16S rRNA nuclease (151 aa).

This sequence belongs to the YqgF nuclease family.

It is found in the cytoplasm. Could be a nuclease involved in processing of the 5'-end of pre-16S rRNA. The polypeptide is Putative pre-16S rRNA nuclease (Bifidobacterium adolescentis (strain ATCC 15703 / DSM 20083 / NCTC 11814 / E194a)).